We begin with the raw amino-acid sequence, 582 residues long: Aspartate--tRNA(Asp/Asn) ligase (582 aa).

Glu-177 lines the L-aspartate pocket. The tract at residues 201-204 (QLFK) is aspartate. L-aspartate is bound at residue Arg-223. ATP contacts are provided by residues 223 to 225 (RDE) and Gln-232. L-aspartate is bound at residue His-447. Glu-481 serves as a coordination point for ATP. Arg-488 lines the L-aspartate pocket. 533 to 536 (GLDR) lines the ATP pocket.

Belongs to the class-II aminoacyl-tRNA synthetase family. Type 1 subfamily. In terms of assembly, homodimer.

It localises to the cytoplasm. The enzyme catalyses tRNA(Asx) + L-aspartate + ATP = L-aspartyl-tRNA(Asx) + AMP + diphosphate. Functionally, aspartyl-tRNA synthetase with relaxed tRNA specificity since it is able to aspartylate not only its cognate tRNA(Asp) but also tRNA(Asn). Reaction proceeds in two steps: L-aspartate is first activated by ATP to form Asp-AMP and then transferred to the acceptor end of tRNA(Asp/Asn). This chain is Aspartate--tRNA(Asp/Asn) ligase, found in Chlamydia trachomatis serovar A (strain ATCC VR-571B / DSM 19440 / HAR-13).